Consider the following 347-residue polypeptide: NADH-ubiquinone oxidoreductase chain 2 (347 aa).

Helical transmembrane passes span 2-22, 26-46, 60-80, 94-114, 127-147, 151-171, 179-197, 201-223, 242-262, 274-294, and 325-345; these read LSPL…LVTF, SWIL…PLMA, YFIA…LAAW, IILN…PMHF, TGMI…IQIA, NNAF…WGGL, IIAY…MAPF, ITWV…LNTL, MLLL…GFTN, NLVI…FFYT, and LMTM…AIFI.

The protein belongs to the complex I subunit 2 family.

It localises to the mitochondrion inner membrane. The enzyme catalyses a ubiquinone + NADH + 5 H(+)(in) = a ubiquinol + NAD(+) + 4 H(+)(out). Its function is as follows. Core subunit of the mitochondrial membrane respiratory chain NADH dehydrogenase (Complex I) that is believed to belong to the minimal assembly required for catalysis. Complex I functions in the transfer of electrons from NADH to the respiratory chain. The immediate electron acceptor for the enzyme is believed to be ubiquinone. The protein is NADH-ubiquinone oxidoreductase chain 2 (MT-ND2) of Lampetra fluviatilis (European river lamprey).